The following is a 247-amino-acid chain: GTP cyclohydrolase 1 type 2 homolog (247 aa).

Histidine 63, histidine 64, aspartate 101, histidine 215, and glutamate 219 together coordinate a divalent metal cation.

Belongs to the GTP cyclohydrolase I type 2/NIF3 family. As to quaternary structure, homohexamer.

This Buchnera aphidicola subsp. Acyrthosiphon pisum (strain APS) (Acyrthosiphon pisum symbiotic bacterium) protein is GTP cyclohydrolase 1 type 2 homolog.